Consider the following 257-residue polypeptide: Phosphonates import ATP-binding protein PhnC (257 aa).

The 245-residue stretch at 4–248 (IEFKDVSKVY…VFNHIYGRSI (245 aa)) folds into the ABC transporter domain.

This sequence belongs to the ABC transporter superfamily. Phosphonates importer (TC 3.A.1.9.1) family. As to quaternary structure, the complex is composed of two ATP-binding proteins (PhnC), two transmembrane proteins (PhnE) and a solute-binding protein (PhnD).

It is found in the cell membrane. It catalyses the reaction phosphonate(out) + ATP + H2O = phosphonate(in) + ADP + phosphate + H(+). Its function is as follows. Part of the ABC transporter complex PhnCDE involved in phosphonates import. Responsible for energy coupling to the transport system. This is Phosphonates import ATP-binding protein PhnC from Staphylococcus epidermidis (strain ATCC 35984 / DSM 28319 / BCRC 17069 / CCUG 31568 / BM 3577 / RP62A).